The chain runs to 257 residues: Sulfur carrier protein FdhD (257 aa).

The Cysteine persulfide intermediate role is filled by Cys105.

This sequence belongs to the FdhD family.

It localises to the cytoplasm. Functionally, required for formate dehydrogenase (FDH) activity. Acts as a sulfur carrier protein that transfers sulfur from IscS to the molybdenum cofactor prior to its insertion into FDH. This is Sulfur carrier protein FdhD from Saccharolobus solfataricus (strain ATCC 35092 / DSM 1617 / JCM 11322 / P2) (Sulfolobus solfataricus).